A 123-amino-acid polypeptide reads, in one-letter code: Large ribosomal subunit protein uL14 (123 aa).

The protein belongs to the universal ribosomal protein uL14 family. As to quaternary structure, part of the 50S ribosomal subunit. Forms a cluster with proteins L3 and L19. In the 70S ribosome, L14 and L19 interact and together make contacts with the 16S rRNA in bridges B5 and B8.

Binds to 23S rRNA. Forms part of two intersubunit bridges in the 70S ribosome. The protein is Large ribosomal subunit protein uL14 of Corynebacterium jeikeium (strain K411).